Here is a 503-residue protein sequence, read N- to C-terminus: UDP-N-acetylglucosamine--peptide N-acetylglucosaminyltransferase GtfA subunit (503 aa).

The segment at 1 to 78 (MTIYNINLGI…FTDIKIAPTS (78 aa)) is N-terminus R-fold-1. A UDP-binding site is contributed by 16-19 (GVEY). Residues 79–195 (VTVDDVLAYF…VYHFKDKIFY (117 aa)) form an extended beta-sheet domain region. The C-terminus R-fold-1 stretch occupies residues 196-306 (GKQAFVRAFM…QPKIVTIPVG (111 aa)). N-acetyl-D-glucosamine is bound at residue H242. Positions 307–503 (SIDSLTDSSQ…KKTVEEVLHD (197 aa)) are R-fold-2. R328 is a binding site for UDP. Residue E332 participates in N-acetyl-D-glucosamine binding. Residues K333, G358, and 384–385 (HA) each bind UDP. 404 to 407 (EGFG) serves as a coordination point for N-acetyl-D-glucosamine. 408 to 412 (LTLME) is a UDP binding site.

It belongs to the glycosyltransferase group 1 family. Glycosyltransferase 4 subfamily. Monomer. Interacts with stabilizing protein GtfB, probably as a heterotetramer with 2 subunits each of GtfA and GtfB, part of the accessory SecA2/SecY2 protein translocation apparatus.

It localises to the cytoplasm. The protein localises to the cell membrane. The enzyme catalyses L-seryl-[protein] + UDP-N-acetyl-alpha-D-glucosamine = 3-O-[N-acetyl-alpha-D-glucosaminyl]-L-seryl-[protein] + UDP + H(+). Its pathway is protein modification; protein glycosylation. Functionally, required for the polymorphic O-glycosylation of serine-rich repeat protein PsrP. Catalyzes the first step in glycosylation by transferring N-acetylglucosamine from UDP-GlcNAc to serine residues in PsrP. Part of the accessory SecA2/SecY2 system specifically required to export serine-rich repeat cell wall proteins encoded upstream in the same operon. The GtfA-GtfB complex adds GlcNAc from UDP-GlcNAc to PsrP (experimentally characterized with truncated PsrP-SSR1 constructs); this subunit alone has weak N-acetylglucosaminyl transferase activity that is 10-fold stimulated by GtfB. The complex requires at least a 25 residue-long peptide for activity; the in vitro assay has only been seen to glycosylate Ser residues. The alpha linkage was shown in L.reuteri. This Streptococcus pneumoniae serotype 4 (strain ATCC BAA-334 / TIGR4) protein is UDP-N-acetylglucosamine--peptide N-acetylglucosaminyltransferase GtfA subunit.